Here is a 163-residue protein sequence, read N- to C-terminus: MGKSARLRRSQTSSPENVLLGKDSSDDPYRSDSETESNSSSGTESNMSSDSTTSAGVSAMIRVLSDSLLRTELAEMEMIKAREAARLEAEKRRLEMEVDLTQMVLQTHLQAMSSLPVGEHKIYQAQRKRKRSDVEELESSTREKSIALLGLLQLNLIFWNSLT.

Positions 1–54 are disordered; sequence MGKSARLRRSQTSSPENVLLGKDSSDDPYRSDSETESNSSSGTESNMSSDSTTS. The span at 23-33 shows a compositional bias: basic and acidic residues; that stretch reads DSSDDPYRSDS. The segment covering 36 to 52 has biased composition (low complexity); sequence ESNSSSGTESNMSSDST. The stretch at 69–143 forms a coiled coil; the sequence is LRTELAEMEM…VEELESSTRE (75 aa).

This is an uncharacterized protein from Arabidopsis thaliana (Mouse-ear cress).